Here is a 935-residue protein sequence, read N- to C-terminus: Protein translocase subunit SecA (935 aa).

ATP-binding positions include glutamine 86, glycine 104–threonine 108, and aspartate 494. The disordered stretch occupies residues glutamate 879 to histidine 935.

This sequence belongs to the SecA family. As to quaternary structure, monomer and homodimer. Part of the essential Sec protein translocation apparatus which comprises SecA, SecYEG and auxiliary proteins SecDF. Other proteins may also be involved.

Its subcellular location is the cell membrane. The protein resides in the cytoplasm. The enzyme catalyses ATP + H2O + cellular proteinSide 1 = ADP + phosphate + cellular proteinSide 2.. In terms of biological role, part of the Sec protein translocase complex. Interacts with the SecYEG preprotein conducting channel. Has a central role in coupling the hydrolysis of ATP to the transfer of proteins into and across the cell membrane, serving as an ATP-driven molecular motor driving the stepwise translocation of polypeptide chains across the membrane. The polypeptide is Protein translocase subunit SecA (Leifsonia xyli subsp. xyli (strain CTCB07)).